We begin with the raw amino-acid sequence, 567 residues long: uncharacterized protein (567 aa).

Belongs to the protein kinase superfamily. ADCK protein kinase family.

This is an uncharacterized protein from Synechocystis sp. (strain ATCC 27184 / PCC 6803 / Kazusa).